A 32-amino-acid chain; its full sequence is Variegin (32 aa).

The segment at 1–32 (SDQGDVAEPKMHKTAPPFDFEAIPEEYLDDES) is disordered. The contains the active site stretch occupies residues 8–14 (EPKMHKT). O-linked (Hex) threonine glycosylation occurs at Thr14. Residues 22-32 (AIPEEYLDDES) show a composition bias toward acidic residues.

As to quaternary structure, interacts with human F2 (thrombin); the interaction results in thrombin inhibition.

Its subcellular location is the secreted. Its function is as follows. Thrombin inhibitor. Does not inhibit other serine proteases. The protein is Variegin of Amblyomma variegatum (Tropical bont tick).